A 170-amino-acid polypeptide reads, in one-letter code: 6,7-dimethyl-8-ribityllumazine synthase 2 (170 aa).

5-amino-6-(D-ribitylamino)uracil contacts are provided by residues Trp25, 59-61, and 83-85; these read AFE and LVV. The active-site Proton donor is the Arg91. Ser116 contributes to the 5-amino-6-(D-ribitylamino)uracil binding site. Residue His130 coordinates (2S)-2-hydroxy-3-oxobutyl phosphate.

This sequence belongs to the DMRL synthase family. Forms an icosahedral capsid composed of 60 subunits, arranged as a dodecamer of pentamers.

It catalyses the reaction (2S)-2-hydroxy-3-oxobutyl phosphate + 5-amino-6-(D-ribitylamino)uracil = 6,7-dimethyl-8-(1-D-ribityl)lumazine + phosphate + 2 H2O + H(+). The protein operates within cofactor biosynthesis; riboflavin biosynthesis; riboflavin from 2-hydroxy-3-oxobutyl phosphate and 5-amino-6-(D-ribitylamino)uracil: step 1/2. Catalyzes the formation of 6,7-dimethyl-8-ribityllumazine by condensation of 5-amino-6-(D-ribitylamino)uracil with 3,4-dihydroxy-2-butanone 4-phosphate. This is the penultimate step in the biosynthesis of riboflavin. This chain is 6,7-dimethyl-8-ribityllumazine synthase 2, found in Pseudomonas syringae pv. tomato (strain ATCC BAA-871 / DC3000).